Consider the following 465-residue polypeptide: Cysteine--tRNA ligase (465 aa).

Cys-27 contributes to the Zn(2+) binding site. Residues Pro-29–Asn-39 carry the 'HIGH' region motif. Cys-207, His-232, and Glu-236 together coordinate Zn(2+). Positions Lys-264–Ser-268 match the 'KMSKS' region motif. Lys-267 is a binding site for ATP.

Belongs to the class-I aminoacyl-tRNA synthetase family. In terms of assembly, monomer. Zn(2+) serves as cofactor.

The protein resides in the cytoplasm. It carries out the reaction tRNA(Cys) + L-cysteine + ATP = L-cysteinyl-tRNA(Cys) + AMP + diphosphate. The polypeptide is Cysteine--tRNA ligase (Clostridium botulinum (strain Langeland / NCTC 10281 / Type F)).